The chain runs to 192 residues: Orotate phosphoribosyltransferase (192 aa).

5-phospho-alpha-D-ribose 1-diphosphate is bound at residue 116-124 (EDIVTTGLS). Orotate-binding residues include Thr-120 and Arg-148.

It belongs to the purine/pyrimidine phosphoribosyltransferase family. PyrE subfamily. Homodimer. Requires Mg(2+) as cofactor.

It carries out the reaction orotidine 5'-phosphate + diphosphate = orotate + 5-phospho-alpha-D-ribose 1-diphosphate. It functions in the pathway pyrimidine metabolism; UMP biosynthesis via de novo pathway; UMP from orotate: step 1/2. Functionally, catalyzes the transfer of a ribosyl phosphate group from 5-phosphoribose 1-diphosphate to orotate, leading to the formation of orotidine monophosphate (OMP). The protein is Orotate phosphoribosyltransferase of Bartonella bacilliformis (strain ATCC 35685 / KC583 / Herrer 020/F12,63).